We begin with the raw amino-acid sequence, 378 residues long: Glutamate 5-kinase (378 aa).

K21 lines the ATP pocket. Substrate is bound by residues S61, D148, and N160. ATP is bound at residue 180–181 (TD). A PUA domain is found at 286–364 (RGTLVLDAGA…RRIEELLGYM (79 aa)).

Belongs to the glutamate 5-kinase family.

Its subcellular location is the cytoplasm. The enzyme catalyses L-glutamate + ATP = L-glutamyl 5-phosphate + ADP. The protein operates within amino-acid biosynthesis; L-proline biosynthesis; L-glutamate 5-semialdehyde from L-glutamate: step 1/2. Functionally, catalyzes the transfer of a phosphate group to glutamate to form L-glutamate 5-phosphate. This is Glutamate 5-kinase from Chromohalobacter salexigens (strain ATCC BAA-138 / DSM 3043 / CIP 106854 / NCIMB 13768 / 1H11).